Here is a 118-residue protein sequence, read N- to C-terminus: Tail tube protein (118 aa).

In terms of assembly, homomultimer.

It localises to the virion. It is found in the host cytoplasm. Polymerizes to make up the central tail tube that is surrounded by the tail sheath protein (TSP). Tail tube protein polymerization takes place around the tape measure protein (TMP) and is probably directed by chaperone proteins. Upon binding to host cell, the tail sheath contracts and the tail tube penetrates the host envelope. The tail tube is involved in viral genome delivery during ejection. This chain is Tail tube protein (M), found in Enterobacteriaceae (Bacteriophage Mu).